A 312-amino-acid polypeptide reads, in one-letter code: MSRLSEPSPYVEFDRRQWRALRMSTPLALTEEELVGLRGLGEQIDLLEVEEVYLPLARLIHLQVAARQRLFAATAEFLGEPQQNPDRPVPFIIGVAGSVAVGKSTTARVLQALLARWDHHPRVDLVTTDGFLYPNAELQRRNLMHRKGFPESYNRRALMRFVTSVKSGSDYACAPVYSHLHYDIIPGAEQVVRHPDILILEGLNVLQTGPTLMVSDLFDFSLYVDARIEDIEQWYVSRFLAMRTTAFADPESHFHHYAAFSDSQAVVAAREIWRTINRPNLVENILPTRPRATLVLRKDADHSINRLRLRKL.

ATP is bound at residue 97–104; it reads GSVAVGKS.

It belongs to the prokaryotic pantothenate kinase family.

It is found in the cytoplasm. The catalysed reaction is (R)-pantothenate + ATP = (R)-4'-phosphopantothenate + ADP + H(+). Its pathway is cofactor biosynthesis; coenzyme A biosynthesis; CoA from (R)-pantothenate: step 1/5. This chain is Pantothenate kinase, found in Mycobacterium bovis (strain BCG / Pasteur 1173P2).